Consider the following 380-residue polypeptide: Kappa-type opioid receptor (380 aa).

The Extracellular segment spans residues 1 to 57 (MESPIQIFRGEPGPTCAPSACLLPNSSSWFPNWAESDSNGSVGSEDQQLEPAHISPA). N-linked (GlcNAc...) asparagine glycans are attached at residues Asn25 and Asn39. The chain crosses the membrane as a helical span at residues 58-85 (IPVIITAVYSVVFVVGLVGNSLVMFVII). The Cytoplasmic segment spans residues 86-95 (RYTKMKTATN). A helical membrane pass occupies residues 96–119 (IYIFNLALADALVTTTMPFQSAVY). The Extracellular segment spans residues 120–132 (LMNSWPFGDVLCK). A disulfide bridge links Cys131 with Cys210. The chain crosses the membrane as a helical span at residues 133–154 (IVISIDYYNMFTSIFTLTMMSV). Over 155 to 173 (DRYIAVCHPVKALDFRTPL) the chain is Cytoplasmic. The chain crosses the membrane as a helical span at residues 174 to 196 (KAKIINICIWLLASSVGISAIVL). The Extracellular segment spans residues 197-222 (GGTKVREDVDVIECSLQFPDDEYSWW). Residues 223–247 (DLFMKICVFVFAFVIPVLIIIVCYT) traverse the membrane as a helical segment. Over 248–274 (LMILRLKSVRLLSGSREKDRNLRRITK) the chain is Cytoplasmic. A helical membrane pass occupies residues 275-296 (LVLVVVAVFIICWTPIHIFILV). Over 297 to 311 (EALGSTSHSTAVLSS) the chain is Extracellular. The chain crosses the membrane as a helical span at residues 312-333 (YYFCIALGYTNSSLNPVLYAFL). Topologically, residues 334-380 (DENFKRCFRDFCFPIKMRMERQSTNRVRNTVQDPASMRDVGGMNKPV) are cytoplasmic. Cys345 carries S-palmitoyl cysteine lipidation.

This sequence belongs to the G-protein coupled receptor 1 family. As to quaternary structure, interacts with NHERF1. Interacts with GABARAPL1.

Its subcellular location is the cell membrane. In terms of biological role, G-protein coupled opioid receptor that functions as a receptor for endogenous alpha-neoendorphins and dynorphins, but has low affinity for beta-endorphins. Also functions as a receptor for various synthetic opioids and for the psychoactive diterpene salvinorin A. Ligand binding causes a conformation change that triggers signaling via guanine nucleotide-binding proteins (G proteins) and modulates the activity of down-stream effectors, such as adenylate cyclase. Signaling leads to the inhibition of adenylate cyclase activity. Inhibits neurotransmitter release by reducing calcium ion currents and increasing potassium ion conductance. Plays a role in the perception of pain. Plays a role in mediating reduced physical activity upon treatment with synthetic opioids. Plays a role in the regulation of salivation in response to synthetic opioids. May play a role in arousal and regulation of autonomic and neuroendocrine functions. The sequence is that of Kappa-type opioid receptor (Oprk1) from Rattus norvegicus (Rat).